Consider the following 658-residue polypeptide: Translation factor GUF1, mitochondrial (658 aa).

The transit peptide at 1–40 (MRGCLQTVRWLTSAWQRPPSYPPLSRAAPCRFFNVSIPRN) directs the protein to the mitochondrion. In terms of domain architecture, tr-type G spans 60-240 (DRFRNFCIVA…TVVEQIPAPV (181 aa)). GTP-binding positions include 69 to 76 (AHVDHGKS), 133 to 137 (DTPGH), and 187 to 190 (NKVD).

Belongs to the TRAFAC class translation factor GTPase superfamily. Classic translation factor GTPase family. LepA subfamily.

The protein resides in the mitochondrion inner membrane. It carries out the reaction GTP + H2O = GDP + phosphate + H(+). Its function is as follows. Promotes mitochondrial protein synthesis. May act as a fidelity factor of the translation reaction, by catalyzing a one-codon backward translocation of tRNAs on improperly translocated ribosomes. Binds to mitochondrial ribosomes in a GTP-dependent manner. This Paracoccidioides brasiliensis (strain Pb03) protein is Translation factor GUF1, mitochondrial.